A 1157-amino-acid chain; its full sequence is ATP-dependent helicase/deoxyribonuclease subunit B (1157 aa).

The UvrD-like helicase ATP-binding domain occupies 1–299 (MSIRFIIGRA…SHLEKYFFVR (299 aa)). 8-15 (GRAGAGKT) is a binding site for ATP. One can recognise a UvrD-like helicase C-terminal domain in the interval 279 to 590 (GNTARFKSPA…LVASLERSRN (312 aa)). [4Fe-4S] cluster contacts are provided by cysteine 792, cysteine 1112, cysteine 1115, and cysteine 1121.

Belongs to the helicase family. AddB/RexB type 1 subfamily. Heterodimer of AddA and AddB. The cofactor is Mg(2+). [4Fe-4S] cluster is required as a cofactor.

Its function is as follows. The heterodimer acts as both an ATP-dependent DNA helicase and an ATP-dependent, dual-direction single-stranded exonuclease. Recognizes the chi site generating a DNA molecule suitable for the initiation of homologous recombination. The AddB subunit has 5' -&gt; 3' nuclease activity but not helicase activity. The polypeptide is ATP-dependent helicase/deoxyribonuclease subunit B (Pelotomaculum thermopropionicum (strain DSM 13744 / JCM 10971 / SI)).